A 992-amino-acid chain; its full sequence is Ribosome quality control complex subunit NEMF homolog (992 aa).

Residues 214–231 (KETTEETPEAEDKPEKGG) are compositionally biased toward basic and acidic residues. The disordered stretch occupies residues 214-245 (KETTEETPEAEDKPEKGGKKQRKKQQNTKLEQ). Coiled-coil stretches lie at residues 331–370 (STQE…LTKV) and 481–514 (SAAQ…VRTI). Disordered regions lie at residues 688–715 (EVEH…NTEI) and 771–895 (GPSR…GDVD). Residues 702-715 (SNINLSEPSSNTEI) show a composition bias toward polar residues. Positions 774 to 839 (RKKQVSAKKT…QDDEEREIRM (66 aa)) form a coiled coil. Over residues 782–796 (KTKEDKARAKQEAAK) the composition is skewed to basic and acidic residues. Basic residues predominate over residues 814–825 (RGQKGKLKKMKQ). Over residues 845–874 (SGKEKPQASADKVVEKSESTKEYVKPEKSA) the composition is skewed to basic and acidic residues.

Belongs to the NEMF family. As to quaternary structure, component of the ribosome quality control complex (RQC), composed of at least the E3 ubiquitin ligase l(3)76BDr/LTN1 and Clbn/NEMF associated with the 60S ribosomal subunit. The complex probably also contains TCF25 as well as TER94/VCP and its ubiquitin-binding cofactors. Interacts (via its C-terminus) with pros (via its homeobox). Interacts (via its N-terminus) with emb. In terms of tissue distribution, expressed in enterocytes (at protein level).

It is found in the nucleus. It localises to the cytoplasm. The protein resides in the mitochondrion outer membrane. Key component of the ribosome quality control complex (RQC), a ribosome-associated complex that mediates the extraction of incompletely synthesized nascent chains from stalled ribosomes as well as their ubiquitin-mediated proteasomal degradation. Thereby, frees 60S subunit ribosomes from the stalled translation complex and prevents the accumulation of nascent polypeptide chains that are potentially toxic for the cell. Within the RQC complex, Clbn/NEMF specifically binds stalled 60S ribosomal subunits by recognizing an exposed, nascent chain-conjugated tRNA moiety. Following binding to stalled 60S ribosomal subunits, Clbn/NEMF mediates CAT tailing by recruiting alanine-charged tRNA to the A-site and directing the elongation of stalled nascent chains independently of mRNA or 40S subunits, leading to non-templated C-terminal alanine extensions (CAT tails). On mitochondrial surface, plays a role in mitochondrial-stress induced translational termination impairment and protein carboxyl terminal extension (MISTERMINATE). Plays a role in regulating nuclear transport possibly through directly binding to both emb and cargo proteins. Plays a role in the regulation of G1-to-S cell cycle transition. Regulates S phase checkpoint by antagonizing E2F1 activity. Together with hid and tefu/ATM, plays a role in DNA damage-induced apoptosis through both p53-dependent and -independent activity. Plays an essential role in the regulation of mitochondrial structure and redox state in enterocytes which is essential for the control of intestinal stem cells proliferation and intestinal homeostasis. This is Ribosome quality control complex subunit NEMF homolog from Drosophila melanogaster (Fruit fly).